The following is a 390-amino-acid chain: MTAVSLGIPAVPPPPLAPRRASRQIMVGSVPVGGGAPVSVQSMTTTLTADVNATLQQIAELTAAGCQIVRVAVPSQDDVAALPAIARKSQLPVIADIHFQPRYVFAAIEAGCAAVRVNPGNIRQFDDKVKEIAKAAGDAGVPIRIGVNAGSLDKRLLAKHGKATAEALVESALWECSLFEEHGFRDIKISVKHNDPVVMVRAYRQLAEACDYPLHLGVTEAGPAFQGTIKSSVAFGALLAEGIGDTIRVSLSAPPVEEIKVGAAILESLGLRERGLEIVSCPSCGRAQVDVYKLAEEVTAGLEGLPVPLRVAVMGCVVNGPGEAREADLGVASGNGKGQIFVKGQVIKTVPEGQIVETLIEEALRLAEEMGAELPEELRSLAGGATVTVH.

4 residues coordinate [4Fe-4S] cluster: Cys-281, Cys-284, Cys-316, and Glu-323.

Belongs to the IspG family. The cofactor is [4Fe-4S] cluster.

The enzyme catalyses (2E)-4-hydroxy-3-methylbut-2-enyl diphosphate + oxidized [flavodoxin] + H2O + 2 H(+) = 2-C-methyl-D-erythritol 2,4-cyclic diphosphate + reduced [flavodoxin]. It functions in the pathway isoprenoid biosynthesis; isopentenyl diphosphate biosynthesis via DXP pathway; isopentenyl diphosphate from 1-deoxy-D-xylulose 5-phosphate: step 5/6. Its function is as follows. Converts 2C-methyl-D-erythritol 2,4-cyclodiphosphate (ME-2,4cPP) into 1-hydroxy-2-methyl-2-(E)-butenyl 4-diphosphate. The polypeptide is 4-hydroxy-3-methylbut-2-en-1-yl diphosphate synthase (flavodoxin) (Salinispora tropica (strain ATCC BAA-916 / DSM 44818 / JCM 13857 / NBRC 105044 / CNB-440)).